Reading from the N-terminus, the 486-residue chain is Serine/threonine-protein phosphatase 2A 56 kDa regulatory subunit alpha isoform (486 aa).

A compositionally biased stretch (low complexity) spans 1-18 (MSSSSPPAGAASAAISAS). Residues 1 to 52 (MSSSSPPAGAASAAISASEKVDGFTRKSVRKAQRQKRSQGSSQFRSQGSQAE) are disordered. Ser-2 is subject to N-acetylserine. Basic residues predominate over residues 27 to 37 (KSVRKAQRQKR). The segment covering 38–51 (SQGSSQFRSQGSQA) has biased composition (low complexity). Phosphoserine is present on residues Ser-41, Ser-42, and Ser-49.

This sequence belongs to the phosphatase 2A regulatory subunit B56 family. As to quaternary structure, PP2A consists of a common heterodimeric core enzyme, composed of a 36 kDa catalytic subunit (subunit C) and a 65 kDa constant regulatory subunit (PR65 or subunit A), that associates with a variety of regulatory subunits. Proteins that associate with the core dimer include three families of regulatory subunits B (the R2/B/PR55/B55, R3/B''/PR72/PR130/PR59 and R5/B'/B56 families), the 48 kDa variable regulatory subunit, viral proteins, and cell signaling molecules. Interacts with SGO1. Post-translationally, phosphorylated on serine residues. Widely expressed with the highest expression in heart and skeletal muscle.

It localises to the cytoplasm. Its subcellular location is the nucleus. The protein localises to the chromosome. The protein resides in the centromere. Functionally, the B regulatory subunit might modulate substrate selectivity and catalytic activity, and might also direct the localization of the catalytic enzyme to a particular subcellular compartment. The polypeptide is Serine/threonine-protein phosphatase 2A 56 kDa regulatory subunit alpha isoform (PPP2R5A) (Homo sapiens (Human)).